The primary structure comprises 468 residues: Interstitial collagenase (468 aa).

An N-terminal signal peptide occupies residues 1-18; the sequence is MPGLPLLLLLLWGVGSHG. Positions 19 to 98 are cleaved as a propeptide — activation peptide; it reads FPAASETQEQ…PRCGVPDVAQ (80 aa). A Cysteine switch motif is present at residues 89-96; sequence PRCGVPDV. Residue C91 coordinates Zn(2+). N119 is a glycosylation site (N-linked (GlcNAc...) asparagine). Ca(2+)-binding residues include D123 and D157. H167 and D169 together coordinate Zn(2+). 4 residues coordinate Ca(2+): D174, G175, E177, and Q179. Residue H182 participates in Zn(2+) binding. G189, G191, and D193 together coordinate Ca(2+). Zn(2+) is bound at residue H195. Ca(2+) contacts are provided by D197, E198, and D200. H217 contacts Zn(2+). E218 is an active-site residue. H221 and H227 together coordinate Zn(2+). Phosphothreonine is present on T273. Hemopexin repeat units follow at residues 274 to 323, 324 to 370, 373 to 421, and 422 to 465; these read PKVC…WPHL, PNGL…FGFP, VNHI…FPGI, and GNKV…WFNC. A disulfide bridge connects residues C277 and C465. Positions 284 and 328 each coordinate Ca(2+). Y359 carries the phosphotyrosine; by PKDCC modification. The Ca(2+) site is built by D377 and D426.

This sequence belongs to the peptidase M10A family. Requires Ca(2+) as cofactor. Zn(2+) serves as cofactor. Tyrosine phosphorylated in platelets by PKDCC/VLK.

Its subcellular location is the secreted. It localises to the extracellular space. The protein resides in the extracellular matrix. The enzyme catalyses Cleavage of the triple helix of collagen at about three-quarters of the length of the molecule from the N-terminus, at 775-Gly-|-Ile-776 in the alpha1(I) chain. Cleaves synthetic substrates and alpha-macroglobulins at bonds where P1' is a hydrophobic residue.. Can be activated without removal of the activation peptide. Its function is as follows. Cleaves collagens of types I, II, and III at one site in the helical domain. Also cleaves collagens of types VII and X. The polypeptide is Interstitial collagenase (MMP1) (Oryctolagus cuniculus (Rabbit)).